The primary structure comprises 723 residues: Polyribonucleotide nucleotidyltransferase (723 aa).

Mg(2+) contacts are provided by aspartate 488 and aspartate 494. The region spanning 555-614 is the KH domain; sequence PKIITLNIKPEKIKDVIGPGGKQINAIIDETGVKIDIEQDGTVYIASQDQAMNRKAIAII. The S1 motif domain maps to 624-692; that stretch reads GEVYTGKVRR…QQGRVNLSRK (69 aa). The disordered stretch occupies residues 692–723; it reads KALLEKKEQPEGDKKPQAEKKFYPKTKKPESK. A compositionally biased stretch (basic and acidic residues) spans 693 to 723; it reads ALLEKKEQPEGDKKPQAEKKFYPKTKKPESK.

The protein belongs to the polyribonucleotide nucleotidyltransferase family. It depends on Mg(2+) as a cofactor.

The protein localises to the cytoplasm. The enzyme catalyses RNA(n+1) + phosphate = RNA(n) + a ribonucleoside 5'-diphosphate. Functionally, involved in mRNA degradation. Catalyzes the phosphorolysis of single-stranded polyribonucleotides processively in the 3'- to 5'-direction. The protein is Polyribonucleotide nucleotidyltransferase of Listeria monocytogenes serotype 4a (strain HCC23).